A 339-amino-acid chain; its full sequence is Biotin synthase (339 aa).

The region spanning 55–282 (NAVQLSTLLS…KAVVRLSAGR (228 aa)) is the Radical SAM core domain. 3 residues coordinate [4Fe-4S] cluster: C70, C74, and C77. [2Fe-2S] cluster-binding residues include C114, C145, C205, and R277.

Belongs to the radical SAM superfamily. Biotin synthase family. Homodimer. [4Fe-4S] cluster is required as a cofactor. The cofactor is [2Fe-2S] cluster.

It catalyses the reaction (4R,5S)-dethiobiotin + (sulfur carrier)-SH + 2 reduced [2Fe-2S]-[ferredoxin] + 2 S-adenosyl-L-methionine = (sulfur carrier)-H + biotin + 2 5'-deoxyadenosine + 2 L-methionine + 2 oxidized [2Fe-2S]-[ferredoxin]. Its pathway is cofactor biosynthesis; biotin biosynthesis; biotin from 7,8-diaminononanoate: step 2/2. Functionally, catalyzes the conversion of dethiobiotin (DTB) to biotin by the insertion of a sulfur atom into dethiobiotin via a radical-based mechanism. This chain is Biotin synthase, found in Burkholderia ambifaria (strain ATCC BAA-244 / DSM 16087 / CCUG 44356 / LMG 19182 / AMMD) (Burkholderia cepacia (strain AMMD)).